Here is a 341-residue protein sequence, read N- to C-terminus: NADH-quinone oxidoreductase subunit H 1 (341 aa).

8 consecutive transmembrane segments (helical) span residues 13–33, 82–102, 115–135, 161–181, 190–210, 248–268, 277–297, and 313–333; these read LVVI…IAYI, GLFL…WAVI, VGVL…IMAG, IGFV…TAIV, MLGW…VSAL, YVAI…GWLP, WVPG…LFAM, and LGWK…ASVL.

This sequence belongs to the complex I subunit 1 family. As to quaternary structure, NDH-1 is composed of 14 different subunits. Subunits NuoA, H, J, K, L, M, N constitute the membrane sector of the complex.

Its subcellular location is the cell inner membrane. It catalyses the reaction a quinone + NADH + 5 H(+)(in) = a quinol + NAD(+) + 4 H(+)(out). NDH-1 shuttles electrons from NADH, via FMN and iron-sulfur (Fe-S) centers, to quinones in the respiratory chain. The immediate electron acceptor for the enzyme in this species is believed to be ubiquinone. Couples the redox reaction to proton translocation (for every two electrons transferred, four hydrogen ions are translocated across the cytoplasmic membrane), and thus conserves the redox energy in a proton gradient. This subunit may bind ubiquinone. The chain is NADH-quinone oxidoreductase subunit H 1 from Rhodopseudomonas palustris (strain ATCC BAA-98 / CGA009).